A 499-amino-acid polypeptide reads, in one-letter code: Glucooligosaccharide oxidase (499 aa).

The N-terminal stretch at 1-25 (MVRIQELTAALSLASVVQASWIQKR) is a signal peptide. C31 and C80 are oxidised to a cystine. Residues 58–230 (VDYDPAAIAI…SEFEFNTFEA (173 aa)) enclose the FAD-binding PCMH-type domain. The 6-(S-cysteinyl)-8alpha-(pros-histidyl)-FAD (His-Cys) cross-link spans 95–155 (HSYGSYGFGG…GNRALSHGTC (61 aa)). The substrate site is built by Y97, T154, and R270. Residues N330 and N366 are each glycosylated (N-linked (GlcNAc...) asparagine). The substrate site is built by Q378 and Q409. N419 carries an N-linked (GlcNAc...) asparagine glycan. Position 454 (Y454) interacts with substrate. The active-site Proton acceptor is Y454.

Belongs to the oxygen-dependent FAD-linked oxidoreductase family. Requires FAD as cofactor. The FAD cofactor is bound via a bicovalent 6-S-cysteinyl, 8alpha-N1-histidyl FAD linkage.

The protein resides in the secreted. It catalyses the reaction beta-lactose + O2 = lactobiono-1,5-lactone + H2O2. The catalysed reaction is D-cellobiose + O2 = D-cellobiono-1,5-lactone + H2O2. It carries out the reaction D-cellotriose + O2 = D-cellotriono-1,5-lactone + H2O2. The enzyme catalyses D-cellotetraose + O2 = D-cellotetraono-1,5-lactone + H2O2. It catalyses the reaction D-cellopentaose + O2 = D-cellopentaono-1,5-lactone + H2O2. The catalysed reaction is D-cellohexaose + O2 = D-cellohexaono-1,5-lactone + H2O2. Its function is as follows. Catalyzes the selective oxidation of C1 hydroxyl moieties on mono- and disaccharides with concomitant reduction of molecular oxygen to hydrogen peroxide. This results in the formation of the corresponding lactones, which typically undergo spontaneous hydrolysis. Glucooligosaccharide oxidase is able to oxidize the monosaccharide D-glucose as well as the disaccharides maltose, cellobiose, and lactose. In addition, it shows high selectivity for cello- and maltooligosaccharides, indicating that glucooligosaccharide oxidase prefers oligosaccharides with a beta-D-glucosyl unit on the reducing end and additional sugar units linked by alpha- or beta-1,4 glucosidic bonds. The polypeptide is Glucooligosaccharide oxidase (gluO) (Sarocladium strictum (Black bundle disease fungus)).